Reading from the N-terminus, the 180-residue chain is Probable cobalt-precorrin-6B C(15)-methyltransferase (decarboxylating) (180 aa).

S-adenosyl-L-methionine-binding positions include Thr16, 40–44, Asp61, and Ala89; that span reads GCGSG.

It belongs to the methyltransferase superfamily. Archaeal-type CbiT family.

The catalysed reaction is Co-precorrin-6B + S-adenosyl-L-methionine = Co-precorrin-7 + S-adenosyl-L-homocysteine + CO2. It participates in cofactor biosynthesis; adenosylcobalamin biosynthesis; cob(II)yrinate a,c-diamide from sirohydrochlorin (anaerobic route): step 8/10. Functionally, catalyzes the methylation of C-15 in cobalt-precorrin-6B followed by the decarboxylation of C-12 to form cobalt-precorrin-7. This Methanococcus vannielii (strain ATCC 35089 / DSM 1224 / JCM 13029 / OCM 148 / SB) protein is Probable cobalt-precorrin-6B C(15)-methyltransferase (decarboxylating).